A 273-amino-acid chain; its full sequence is Homeobox protein Nkx-2.2 (273 aa).

2 disordered regions span residues 1 to 56 (MSLT…LDAV) and 91 to 131 (AASA…KRKR). Residues 20-38 (DTNDEDGSVAEGPEEESEG) are compositionally biased toward acidic residues. A DNA-binding region (homeobox) is located at residues 128–187 (KRKRRVLFSKAQTYELERRFRQQRYLSAPEREHLASLIRLTPTQVKIWFQNHRYKMKRAR).

Belongs to the NK-2 homeobox family. Interacts with OLIG2. As to expression, expressed in restricted areas of the developing CNS: the hindbrain and forebrain, and pancreas.

The protein resides in the nucleus. Functionally, transcriptional activator involved in the development of insulin-producting beta cells in the endocrine pancreas. May also be involved in specifying diencephalic neuromeric boundaries, and in controlling the expression of genes that play a role in axonal guidance. Binds to elements within the NEUROD1 promoter. The sequence is that of Homeobox protein Nkx-2.2 (Nkx2-2) from Mus musculus (Mouse).